A 145-amino-acid polypeptide reads, in one-letter code: Maximins 3/H11 type 3 (145 aa).

Positions 1–18 (MNFKYIVAVSFLIASAYA) are cleaved as a signal peptide. Propeptides lie at residues 19-43 (RSVQ…LREI) and 75-122 (TAEE…TKKE). The residue at position 144 (Ile144) is an Isoleucine amide.

It belongs to the bombinin family. As to expression, expressed by the skin glands.

The protein localises to the secreted. Maximin-3 shows antibacterial activity against both Gram-positive and Gram-negative bacteria. It also shows antimicrobial activity against the fungus C.albicans, but not against A.flavus nor P.uticale. It has little hemolytic activity. It possess a significant cytotoxicity against tumor cell lines. It possess a significant anti-HIV activity. It shows high spermicidal activity. Functionally, maximin-H11 shows antimicrobial activity against bacteria and against the fungus C.albicans. Shows strong hemolytic activity. This chain is Maximins 3/H11 type 3, found in Bombina maxima (Giant fire-bellied toad).